A 129-amino-acid polypeptide reads, in one-letter code: Thioredoxin H7 (129 aa).

The region spanning 6-129 is the Thioredoxin domain; it reads SSVHDVHSSM…LVKKIEQHRV (124 aa). Residues Cys55 and Cys58 each act as nucleophile in the active site. Cysteines 55 and 58 form a disulfide.

The protein belongs to the thioredoxin family. Plant H-type subfamily.

Its subcellular location is the cytoplasm. Functionally, probable thiol-disulfide oxidoreductase that may be involved in the redox regulation of a number of cytosolic enzymes. This is Thioredoxin H7 (TRX7) from Arabidopsis thaliana (Mouse-ear cress).